The sequence spans 640 residues: MTADIAATPAETPATNGHGDAHSTASFTALTLGSIGVVYGDIGTSPLYALREAVMAASSGGEAAPHAVMGVVSLILWALIVVVTLKYVVILLRADNHGEGGTLALMALAQRGVARGASIIVLLGIISGALFYGDAVITPALSVLSAIEGIKLVTAAFDPYVVPLTIIILVMLFAVQVRGTAKVAAFFGPIMLIWFLVIGIAAFPPILRHPEVLWAINPLHAVSFMLHHGIIGFITLGAVFLAVTGAEALYADLGHFGKRPIQTAWLFVVLPSLALNYLGQGALVIADAKAIENPFFLMFPDWALIPMVALATVATVIASQAVITGAYSLTRQAIQLGLLPRFEIRHTSEAHSGQIYIPRINKLLLVSVVLLVLLFKSSSALASAYGISVTGTMVVTAMMGFVVIWKVWRWSPIAAGALIAPFLFLDLTFLSANLLKVLEGGWVPLALGGFVMTLMYTWRRGSRLLFDKSRKLEFPLADLVAMLEKRPPQRVAGTAVFLTSDPLSAPTALMHSLKHYKVLHEKNVILTIETAPTPRIDPSERVRLEQISPTFSKVTLRFGFMESPNVPKALAIARKLGWQFDIMSTSFFLSRRALKPAAHSGMPRWQDHLFITMSRSANDATDYFQIPSGRVVEVGTQVTI.

Residues 1–20 are disordered; sequence MTADIAATPAETPATNGHGD. 12 helical membrane passes run 30-50, 71-91, 117-137, 155-175, 183-203, 224-244, 265-285, 294-314, 363-383, 385-405, 410-430, and 437-457; these read LTLG…LYAL, VVSL…VVIL, ASII…DAVI, AAFD…LFAV, VAAF…IAAF, FMLH…LAVT, WLFV…ALVI, PFFL…ATVA, LLLV…ALAS, YGIS…VVIW, WSPI…LTFL, and VLEG…LMYT.

It belongs to the HAK/KUP transporter (TC 2.A.72) family.

Its subcellular location is the cell inner membrane. It carries out the reaction K(+)(in) + H(+)(in) = K(+)(out) + H(+)(out). Transport of potassium into the cell. Likely operates as a K(+):H(+) symporter. In Bradyrhizobium sp. (strain ORS 278), this protein is Probable potassium transport system protein Kup 2.